The following is a 660-amino-acid chain: Acetyl-coenzyme A synthetase (660 aa).

Residues 197 to 200 (RGGK) and Thr317 each bind CoA. Residues 397-399 (GEP), 421-426 (DTFWQT), Asp512, and Arg528 each bind ATP. Position 536 (Ser536) interacts with CoA. An ATP-binding site is contributed by Arg539. Mg(2+)-binding residues include Val550 and Val555. N6-acetyllysine is present on Lys625.

It belongs to the ATP-dependent AMP-binding enzyme family. Requires Mg(2+) as cofactor. In terms of processing, acetylated. Deacetylation by the SIR2-homolog deacetylase activates the enzyme.

It catalyses the reaction acetate + ATP + CoA = acetyl-CoA + AMP + diphosphate. Catalyzes the conversion of acetate into acetyl-CoA (AcCoA), an essential intermediate at the junction of anabolic and catabolic pathways. AcsA undergoes a two-step reaction. In the first half reaction, AcsA combines acetate with ATP to form acetyl-adenylate (AcAMP) intermediate. In the second half reaction, it can then transfer the acetyl group from AcAMP to the sulfhydryl group of CoA, forming the product AcCoA. This Cupriavidus metallidurans (strain ATCC 43123 / DSM 2839 / NBRC 102507 / CH34) (Ralstonia metallidurans) protein is Acetyl-coenzyme A synthetase.